The primary structure comprises 141 residues: Large ribosomal subunit protein uL11 (141 aa).

This sequence belongs to the universal ribosomal protein uL11 family. As to quaternary structure, part of the ribosomal stalk of the 50S ribosomal subunit. Interacts with L10 and the large rRNA to form the base of the stalk. L10 forms an elongated spine to which L12 dimers bind in a sequential fashion forming a multimeric L10(L12)X complex. One or more lysine residues are methylated.

Functionally, forms part of the ribosomal stalk which helps the ribosome interact with GTP-bound translation factors. This Acetivibrio thermocellus (strain ATCC 27405 / DSM 1237 / JCM 9322 / NBRC 103400 / NCIMB 10682 / NRRL B-4536 / VPI 7372) (Clostridium thermocellum) protein is Large ribosomal subunit protein uL11.